A 922-amino-acid chain; its full sequence is Centrosomal protein of 104 kDa (922 aa).

Positions 210-277 form a coiled coil; it reads EVAQIIRRLD…DLAKEKKQQM (68 aa). The segment covering 307-318 has biased composition (low complexity); it reads PLQPLASPSSPQ. 2 disordered regions span residues 307–333 and 348–419; these read PLQP…EELA and LASS…PLTE. A compositionally biased stretch (basic and acidic residues) spans 396 to 407; sequence PEVREADSDVRR. HEAT repeat units lie at residues 526 to 564 and 601 to 637; these read AIPL…LQLI and GFTV…YRQH. Composition is skewed to basic and acidic residues over residues 673 to 697 and 714 to 725; these read TEAE…EETK and QEKENEAVKLKN. 2 disordered regions span residues 673–741 and 880–922; these read TEAE…TPEI and PAPQ…HTRR. A coiled-coil region spans residues 678-705; the sequence is KTQKRVVTKEAEKQKKEETKALQGLSAA.

In terms of assembly, interacts with CCP110 and CEP97. Interacts with ARMC9, TOGARAM1, CCDC66 and CSPP1. Expressed predominantly in the brain. Also detected, although at much lower levels, in the heart and the liver. Within the brain, expressed in the cerebral cortex, hippocampus, cerebellum and brainstem.

Its subcellular location is the cell projection. It is found in the cilium. The protein resides in the cytoplasm. The protein localises to the cytoskeleton. It localises to the microtubule organizing center. Its subcellular location is the centrosome. It is found in the centriole. The protein resides in the spindle pole. Required for ciliogenesis and for structural integrity at the ciliary tip. The sequence is that of Centrosomal protein of 104 kDa (Cep104) from Rattus norvegicus (Rat).